A 1840-amino-acid polypeptide reads, in one-letter code: Collagen alpha-1(V) chain (1840 aa).

The first 30 residues, 1–30, serve as a signal peptide directing secretion; sequence MDVHTRWKAPRPGAPLLSSPLLLLLLLLWA. The Laminin G-like domain maps to 72–244; it reads DVAYRVSKDA…DYCEHYSPDC (173 aa). The interval 231–445 is nonhelical region; that stretch reads RAAYDYCEHY…MPANQDTIYE (215 aa). A sulfotyrosine mark is found at Y234, Y236, Y240, Y262, Y263, Y336, Y338, and Y344. 2 disordered regions span residues 241–547 and 561–1576; these read SPDC…QESQ and GPAG…EVIQ. Residues 258–268 show a composition bias toward acidic residues; the sequence is NPDEYYPEGEG. Composition is skewed to low complexity over residues 335 to 352, 375 to 387, and 462 to 471; these read DYDYVPTDDYYTTSPYED, PTSTSVTSNSSNP, and IIEPGMLIEG. The segment at 446 to 560 is interrupted collagenous region; the sequence is GIGGPRGEKG…ILQQARLALR (115 aa). A compositionally biased stretch (pro residues) spans 472–487; it reads PPGPEGPAGLPGPPGT. 2 stretches are compositionally biased toward low complexity: residues 508-525 and 561-572; these read LPGADGLPGPPGTMLMLP and GPAGPMGLTGRP. Residues 561–1572 form a triple-helical region region; it reads GPAGPMGLTG…GLPGPPGPPG (1012 aa). A 4-hydroxyproline mark is found at P572, P578, and P623. Residue K629 is modified to 5-hydroxylysine. P641 carries the post-translational modification 4-hydroxyproline. K644 is modified (5-hydroxylysine). 4-hydroxyproline is present on residues P650, P656, P659, P677, and P680. The span at 673–688 shows a compositional bias: low complexity; the sequence is PRGLPGEPGPRGLLGP. 2 positions are modified to 3-hydroxyproline: P682 and P688. The segment covering 689–698 has biased composition (pro residues); the sequence is KGPPGPPGPP. A 4-hydroxyproline mark is found at P692, P698, and P707. Residue K710 is modified to 5-hydroxylysine. 4-hydroxyproline is present on residues P719, P722, P728, and P734. A compositionally biased stretch (low complexity) spans 724 to 743; it reads QQGNPGAQGLPGPQGAIGPP. K746 is subject to 5-hydroxylysine. Over residues 749–758 the composition is skewed to low complexity; it reads LGKPGLPGMP. A 4-hydroxyproline mark is found at P752, P758, P764, P767, and P773. Residue K776 is modified to 5-hydroxylysine. A 4-hydroxyproline mark is found at P782 and P791. A 5-hydroxylysine mark is found at K797, K806, K809, and K812. The residue at position 818 (P818) is a 4-hydroxyproline. Residue K821 is modified to 5-hydroxylysine. P836 carries the post-translational modification 4-hydroxyproline. Over residues 839 to 848 the composition is skewed to basic and acidic residues; it reads RGEDGPEGPK. K848 and K866 each carry 5-hydroxylysine. 3 positions are modified to 4-hydroxyproline: P872, P875, and P878. K884 carries the post-translational modification 5-hydroxylysine. 2 positions are modified to 4-hydroxyproline: P890 and P893. 5-hydroxylysine is present on K899. 4-hydroxyproline is present on residues P905 and P908. Residues 910–919 show a composition bias toward low complexity; the sequence is PRGQRGPTGP. Residues P932 and P947 each carry the 4-hydroxyproline modification. 2 stretches are compositionally biased toward low complexity: residues 973-992 and 1001-1013; these read KDGLPGHPGQRGETGFQGKT and VGPQGPTGETGPM. A 4-hydroxyproline mark is found at P1019, P1022, P1025, and P1031. Positions 1090–1106 are enriched in low complexity; sequence SPGERGPAGAAGPIGIP. The segment covering 1108-1117 has biased composition (pro residues); sequence RPGPQGPPGP. Residues P1223 and P1226 each carry the 4-hydroxyproline modification. Residues 1261-1270 are compositionally biased toward low complexity; the sequence is PSGAPGADGP. The segment covering 1296–1305 has biased composition (gly residues); sequence GLPGEGGPLG. 2 stretches are compositionally biased toward pro residues: residues 1382 to 1400 and 1456 to 1471; these read TGEPGPSGPPGKRGPPGPA and SPGPDGPPGPMGPPGL. P1469 and P1472 each carry 4-hydroxyproline. Residues 1487–1496 show a composition bias toward low complexity; it reads PGLIGLIGPP. Positions 1528–1543 are enriched in pro residues; the sequence is PLGPPGPPGLPGPPGP. A compositionally biased stretch (low complexity) spans 1544–1556; that stretch reads KGAKGSSGPTGPK. Residues 1573–1607 are nonhelical region; it reads EVIQPLPIQASRTRRNIDASQLLDDGAGESYVDYA. 2 positions are modified to sulfotyrosine: Y1603 and Y1606. The region spanning 1611–1839 is the Fibrillar collagen NC1 domain; it reads EEIFGSLNSL…GFEVGPACFL (229 aa).

It belongs to the fibrillar collagen family. Trimers of two alpha 1(V) and one alpha 2(V) chains in most tissues and trimers of one alpha 1(V), one alpha 2(V), and one alpha 3(V) chains in placenta. Interacts with CSPG4. Prolines at the third position of the tripeptide repeating unit (G-X-Y) are hydroxylated in some or all of the chains. Post-translationally, sulfated on 40% of tyrosines. In terms of processing, hydroxylation on proline residues within the sequence motif, GXPG, is most likely to be 4-hydroxy as this fits the requirement for 4-hydroxylation in vertebrates. As to expression, a high molecular weight form was detected in Schwann cells and peripheral nerve. A lower, probably processed form, is detected in all other tissues tested (at protein level).

It localises to the secreted. The protein localises to the extracellular space. Its subcellular location is the extracellular matrix. Its function is as follows. Type V collagen is a member of group I collagen (fibrillar forming collagen). It is a minor connective tissue component of nearly ubiquitous distribution. Type V collagen binds to DNA, heparan sulfate, thrombospondin, heparin, and insulin. The polypeptide is Collagen alpha-1(V) chain (Col5a1) (Rattus norvegicus (Rat)).